The primary structure comprises 108 residues: Putative pterin-4-alpha-carbinolamine dehydratase (108 aa).

The protein belongs to the pterin-4-alpha-carbinolamine dehydratase family.

The enzyme catalyses (4aS,6R)-4a-hydroxy-L-erythro-5,6,7,8-tetrahydrobiopterin = (6R)-L-erythro-6,7-dihydrobiopterin + H2O. This Bordetella avium (strain 197N) protein is Putative pterin-4-alpha-carbinolamine dehydratase.